The sequence spans 437 residues: Vasoactive intestinal polypeptide receptor 2 (437 aa).

A signal peptide spans 1–22 (MRASVVLTCYCWLLVRVSSIHP). Topologically, residues 23-123 (ECRFHLEIQE…EDESKISFYI (101 aa)) are extracellular. Intrachain disulfides connect C37-C60, C51-C92, and C74-C108. 3 N-linked (GlcNAc...) asparagine glycosylation sites follow: N57, N87, and N91. A helical transmembrane segment spans residues 124-149 (LVKAIYTLGYSVSLMSLTTGSIIICL). Over 150-157 (FRKLHCTR) the chain is Cytoplasmic. A helical membrane pass occupies residues 158–179 (NYIHLNLFLSFMLRAISVLVKD). Topologically, residues 180–202 (SVLYSSSGLLRCHDQPASWVGCK) are extracellular. C201 and C270 are joined by a disulfide. A helical membrane pass occupies residues 203–227 (LSLVFFQYCIMANFYWLLVEGLYLH). Residues 228–238 (TLLVAILPPSR) are Cytoplasmic-facing. The helical transmembrane segment at 239–260 (CFLAYLLIGWGIPSVCIGAWTA) threads the bilayer. The Extracellular segment spans residues 261–279 (TRLSLEDTGCWDTNDHSIP). Residues 280–303 (WWVIRMPILISIVVNFALFISIVR) traverse the membrane as a helical segment. Topologically, residues 304–324 (ILLQKLTSPDVGGNDQSQYKR) are cytoplasmic. Residues 325–345 (LAKSTLLLIPLFGVHYMVFAA) form a helical membrane-spanning segment. Residues 346–353 (FPIGISST) are Extracellular-facing. Residues 354–377 (YQILFELCVGSFQGLVVAVLYCFL) traverse the membrane as a helical segment. Over 378 to 437 (NSEVQCELKRRWRGLCLTQAGSRDYRLHSWSMSRNGSESALQIHRGSRTQSFLQSETSVI) the chain is Cytoplasmic.

The protein belongs to the G-protein coupled receptor 2 family. In terms of assembly, interacts with ADCYAP1/PACAP (via N-terminal extracellular domain); activated by PACAP27 and CAPAC38 neuropeptides. Interacts with VIP; the interaction results in VIPR1 activation. Expressed at high levels in the MIN6 cells, at moderate levels in pancreatic islets, insulin-secreting cells, lung, brain, stomach, and colon, and at low levels in the heart.

Its subcellular location is the cell membrane. Its function is as follows. G protein-coupled receptor activated by the neuropeptides vasoactive intestinal peptide (VIP) and pituitary adenylate cyclase-activating polypeptide (ADCYAP1/PACAP). Binds VIP and both PACAP27 and PACAP38 bioactive peptides with the order of ligand affinity of VIP = PACAP38 &gt; PACAP27. Ligand binding causes a conformation change that triggers signaling via guanine nucleotide-binding proteins (G proteins) and modulates the activity of downstream effectors. Activates cAMP-dependent pathway. May be coupled to phospholipase C. This Mus musculus (Mouse) protein is Vasoactive intestinal polypeptide receptor 2.